A 570-amino-acid polypeptide reads, in one-letter code: Vacuolar protein sorting-associated protein 45 (570 aa).

2 positions are modified to phosphoserine: Ser307 and Ser441.

Belongs to the STXBP/unc-18/SEC1 family. In terms of assembly, interacts with STX6. Interacts with ZFYVE20. As to expression, ubiquitous. Expression was highest in testis, heart and brain, intermediate in kidney, spleen, prostate, ovary, small intestine and thymus and low in lung, skeletal muscle, placenta, colon, pancreas, peripheral blood leukocytes and liver.

It is found in the golgi apparatus membrane. The protein resides in the endosome membrane. May play a role in vesicle-mediated protein trafficking from the Golgi stack through the trans-Golgi network. This is Vacuolar protein sorting-associated protein 45 (VPS45) from Homo sapiens (Human).